Here is a 482-residue protein sequence, read N- to C-terminus: tRNA sulfurtransferase (482 aa).

Positions 61-165 (LAIRDALTRI…DDRLLLIKGR (105 aa)) constitute a THUMP domain. Residues 183 to 184 (LI), K265, G287, and Q296 each bind ATP. C344 and C456 are disulfide-bonded. The Rhodanese domain occupies 404-482 (FGPNDVILDI…GFNNVKVYRP (79 aa)). The active-site Cysteine persulfide intermediate is C456.

The protein belongs to the ThiI family.

It localises to the cytoplasm. The enzyme catalyses [ThiI sulfur-carrier protein]-S-sulfanyl-L-cysteine + a uridine in tRNA + 2 reduced [2Fe-2S]-[ferredoxin] + ATP + H(+) = [ThiI sulfur-carrier protein]-L-cysteine + a 4-thiouridine in tRNA + 2 oxidized [2Fe-2S]-[ferredoxin] + AMP + diphosphate. The catalysed reaction is [ThiS sulfur-carrier protein]-C-terminal Gly-Gly-AMP + S-sulfanyl-L-cysteinyl-[cysteine desulfurase] + AH2 = [ThiS sulfur-carrier protein]-C-terminal-Gly-aminoethanethioate + L-cysteinyl-[cysteine desulfurase] + A + AMP + 2 H(+). Its pathway is cofactor biosynthesis; thiamine diphosphate biosynthesis. Functionally, catalyzes the ATP-dependent transfer of a sulfur to tRNA to produce 4-thiouridine in position 8 of tRNAs, which functions as a near-UV photosensor. Also catalyzes the transfer of sulfur to the sulfur carrier protein ThiS, forming ThiS-thiocarboxylate. This is a step in the synthesis of thiazole, in the thiamine biosynthesis pathway. The sulfur is donated as persulfide by IscS. The sequence is that of tRNA sulfurtransferase from Escherichia coli (strain K12 / MC4100 / BW2952).